Consider the following 207-residue polypeptide: MSEAAHSGAAPADLVELGRIASAYGVKGWVKVQPHSAQAEVLRTVSHWWLTRPAPQAARDVVASVPRAYQVLQARVHGGAVVAQLAGIDDRDQAEALRGCFVQAARSAFPAPADDEYYWVDLIGCALYSDADGEPRLLGVVDEVFDNGAHAVLKVLRQQIQPGQPGPVPLLDPKGRPLEELVPFVRAHIRHVDLAARRIDSDWPLDY.

The 94-residue stretch at 114–207 (DDEYYWVDLI…RIDSDWPLDY (94 aa)) folds into the PRC barrel domain.

It belongs to the RimM family. As to quaternary structure, binds ribosomal protein uS19.

Its subcellular location is the cytoplasm. Its function is as follows. An accessory protein needed during the final step in the assembly of 30S ribosomal subunit, possibly for assembly of the head region. Essential for efficient processing of 16S rRNA. May be needed both before and after RbfA during the maturation of 16S rRNA. It has affinity for free ribosomal 30S subunits but not for 70S ribosomes. This is Ribosome maturation factor RimM from Bordetella pertussis (strain Tohama I / ATCC BAA-589 / NCTC 13251).